A 1470-amino-acid polypeptide reads, in one-letter code: Rap guanine nucleotide exchange factor (1470 aa).

Disordered stretches follow at residues 130–227 and 250–313; these read PTEP…SYND and HRRE…GGFM. Over residues 173–183 the composition is skewed to pro residues; the sequence is MPPPPVPPRPL. Composition is skewed to low complexity over residues 184-193 and 215-224; these read RLPQTAAKGP and TTSSSSSNTS. Polar residues predominate over residues 256–266; sequence NSVGGQAQNGI. A compositionally biased stretch (low complexity) spans 275–292; the sequence is RSTASSTTTEGETASNEG. Position 347–463 (347–463) interacts with a nucleoside 3',5'-cyclic phosphate; that stretch reads AFAALPMSIK…IEKDRDGLTG (117 aa). One can recognise an N-terminal Ras-GEF domain in the interval 478–592; sequence CGQVLIKGKP…SLLNIACSVK (115 aa). One can recognise a PDZ domain in the interval 597 to 679; the sequence is QVILTRRKDD…LTLMLKNNVL (83 aa). In terms of domain architecture, Ras-associating spans 782–869; the sequence is PEHVLKIYRN…SRYYLKNNSR (88 aa). The Ras-GEF domain maps to 894-1124; that stretch reads NAQVVAAQLT…FENSNVATMR (231 aa). The span at 1176-1189 shows a compositional bias: polar residues; sequence QTAHRGANSSSTAN. Disordered stretches follow at residues 1176 to 1213, 1253 to 1326, 1347 to 1370, and 1422 to 1455; these read QTAH…DQSS, KVKG…NIPP, VIPT…PASS, and ATLP…RMGT. Over residues 1198-1211 the composition is skewed to low complexity; it reads PSSLSSQSAGSADQ. Polar residues-rich tracts occupy residues 1260 to 1274 and 1282 to 1308; these read QITS…SLQR and RQAT…YQSD. Residues 1309-1321 are compositionally biased toward basic and acidic residues; the sequence is NGRRQRSGSEGRF. Positions 1349–1370 are enriched in low complexity; that stretch reads PTHPHGHSPTSPRCRSRSPASS.

It belongs to the RAPGEF2 family. As to expression, expressed in hermaphrodite-specific neurons (HSNs), oviduct sheath cells and lateral seam cells.

Acts as a guanine nucleotide exchange factor for small G protein GTPases like rap-1 and rap-2. Required in the hypodermis, especially in the seam cells, for proper formation of the cuticle. This Caenorhabditis elegans protein is Rap guanine nucleotide exchange factor (pxf-1).